Reading from the N-terminus, the 340-residue chain is Phenylalanine--tRNA ligase alpha subunit (340 aa).

Residue E251 coordinates Mg(2+).

This sequence belongs to the class-II aminoacyl-tRNA synthetase family. Phe-tRNA synthetase alpha subunit type 1 subfamily. In terms of assembly, tetramer of two alpha and two beta subunits. Mg(2+) serves as cofactor.

The protein resides in the cytoplasm. It catalyses the reaction tRNA(Phe) + L-phenylalanine + ATP = L-phenylalanyl-tRNA(Phe) + AMP + diphosphate + H(+). This chain is Phenylalanine--tRNA ligase alpha subunit, found in Porphyromonas gingivalis (strain ATCC 33277 / DSM 20709 / CIP 103683 / JCM 12257 / NCTC 11834 / 2561).